Reading from the N-terminus, the 197-residue chain is Putative NADH dehydrogenase/NAD(P)H nitroreductase Plav_3612 (197 aa).

Belongs to the nitroreductase family. HadB/RutE subfamily. It depends on FMN as a cofactor.

The chain is Putative NADH dehydrogenase/NAD(P)H nitroreductase Plav_3612 from Parvibaculum lavamentivorans (strain DS-1 / DSM 13023 / NCIMB 13966).